Reading from the N-terminus, the 205-residue chain is Myb-related protein 305 (205 aa).

HTH myb-type domains are found at residues 10-62 (DVEV…LNYL) and 63-117 (RPDV…QKHM). DNA-binding regions (H-T-H motif) lie at residues 38-62 (WNSLARSAGLKRTGKSCRLRWLNYL) and 90-113 (WSKIAKTLPGRTDNEIKNYWRTRI).

Expressed only in flowers.

Its subcellular location is the nucleus. Functionally, transcription factor. This Antirrhinum majus (Garden snapdragon) protein is Myb-related protein 305.